A 261-amino-acid polypeptide reads, in one-letter code: Indole-3-glycerol phosphate synthase (261 aa).

It belongs to the TrpC family.

It catalyses the reaction 1-(2-carboxyphenylamino)-1-deoxy-D-ribulose 5-phosphate + H(+) = (1S,2R)-1-C-(indol-3-yl)glycerol 3-phosphate + CO2 + H2O. It functions in the pathway amino-acid biosynthesis; L-tryptophan biosynthesis; L-tryptophan from chorismate: step 4/5. In Paraburkholderia phytofirmans (strain DSM 17436 / LMG 22146 / PsJN) (Burkholderia phytofirmans), this protein is Indole-3-glycerol phosphate synthase.